We begin with the raw amino-acid sequence, 565 residues long: Adenine deaminase (565 aa).

It belongs to the metallo-dependent hydrolases superfamily. Adenine deaminase family. Requires Mn(2+) as cofactor.

It catalyses the reaction adenine + H2O + H(+) = hypoxanthine + NH4(+). In Gluconobacter oxydans (strain 621H) (Gluconobacter suboxydans), this protein is Adenine deaminase.